The sequence spans 232 residues: MEKERQDGLSDKHKFILQYIMCRTAGVDNEQVRELVQEQYGETATVEDVINELNNSLHNFDFKIKRVQDQLDGRLTLHFQNLSGDPVSQMATPYPPVQIELMRKIIEWIMKCDDYQYSLTTLQIQKLSRKEMGLAPSVIESHLHTFERDGWLRQREGIWTFTNHALAELDAYLHNEYESNLYECNACREIVIAGYVCDCGYCLHVYCCKHLAHVNCINCNTPWANATVIGRW.

An RING-type; atypical zinc finger spans residues 181–222 (LYECNACREIVIAGYVCDCGYCLHVYCCKHLAHVNCINCNTP).

It belongs to the NSE1 family. As to quaternary structure, two subcomplexes smc5-smc6-nse2 and nse1-nse3-nse4 exist. These subcomplexes are then brought together via a number of interactions, forming the Smc5-Smc6 complex.

It localises to the nucleus. The catalysed reaction is S-ubiquitinyl-[E2 ubiquitin-conjugating enzyme]-L-cysteine + [acceptor protein]-L-lysine = [E2 ubiquitin-conjugating enzyme]-L-cysteine + N(6)-ubiquitinyl-[acceptor protein]-L-lysine.. Its function is as follows. Acts in a DNA repair pathway for removal of UV-induced DNA damage that is distinct from classical nucleotide excision repair and in repair of ionizing radiation damage. Functions in homologous recombination repair of DNA double strand breaks and in recovery of stalled replication forks. Plays a critical role in meiosis. The chain is Non-structural maintenance of chromosomes element 1 (nse1) from Schizosaccharomyces pombe (strain 972 / ATCC 24843) (Fission yeast).